The primary structure comprises 191 residues: MRLTPELLVECYRRGLFPMAGPGGRVGLYRSDPRAVLELDALHVSKSLARVLRKGVYEVRIDQDFEAVIRACADREETWISEEIIRAFLGLHRRGLAHSVEAYDGEGRLAGGLYGVALGGAFFGESMFSRRPDASKVCLVRLVERLRERGYVLLDCQVQSPHLERMGAVEIPEAEFMRRLSEALRLDRAFA.

This sequence belongs to the L/F-transferase family.

The protein localises to the cytoplasm. The enzyme catalyses N-terminal L-lysyl-[protein] + L-leucyl-tRNA(Leu) = N-terminal L-leucyl-L-lysyl-[protein] + tRNA(Leu) + H(+). It catalyses the reaction N-terminal L-arginyl-[protein] + L-leucyl-tRNA(Leu) = N-terminal L-leucyl-L-arginyl-[protein] + tRNA(Leu) + H(+). The catalysed reaction is L-phenylalanyl-tRNA(Phe) + an N-terminal L-alpha-aminoacyl-[protein] = an N-terminal L-phenylalanyl-L-alpha-aminoacyl-[protein] + tRNA(Phe). Functionally, functions in the N-end rule pathway of protein degradation where it conjugates Leu, Phe and, less efficiently, Met from aminoacyl-tRNAs to the N-termini of proteins containing an N-terminal arginine or lysine. The sequence is that of Leucyl/phenylalanyl-tRNA--protein transferase from Rubrobacter xylanophilus (strain DSM 9941 / JCM 11954 / NBRC 16129 / PRD-1).